Here is a 207-residue protein sequence, read N- to C-terminus: Large ribosomal subunit protein uL4 (207 aa).

The disordered stretch occupies residues 56–75; the sequence is EVSGTTKKPFKQKGTGNARQ.

Belongs to the universal ribosomal protein uL4 family. Part of the 50S ribosomal subunit.

One of the primary rRNA binding proteins, this protein initially binds near the 5'-end of the 23S rRNA. It is important during the early stages of 50S assembly. It makes multiple contacts with different domains of the 23S rRNA in the assembled 50S subunit and ribosome. Its function is as follows. Forms part of the polypeptide exit tunnel. In Rickettsia prowazekii (strain Madrid E), this protein is Large ribosomal subunit protein uL4.